Here is an 833-residue protein sequence, read N- to C-terminus: Leucine--tRNA ligase (833 aa).

The 'HIGH' region motif lies at 41-52; that stretch reads PYPSGVGLHVGH. A 'KMSKS' region motif is present at residues 610–614; that stretch reads KMSKS. Position 613 (Lys613) interacts with ATP.

The protein belongs to the class-I aminoacyl-tRNA synthetase family.

It localises to the cytoplasm. The enzyme catalyses tRNA(Leu) + L-leucine + ATP = L-leucyl-tRNA(Leu) + AMP + diphosphate. The protein is Leucine--tRNA ligase of Streptococcus pneumoniae serotype 2 (strain D39 / NCTC 7466).